The chain runs to 599 residues: Aspartate--tRNA(Asp/Asn) ligase (599 aa).

Glu172 is a binding site for L-aspartate. The segment at Gln196–Lys199 is aspartate. Position 218 (Arg218) interacts with L-aspartate. ATP-binding positions include Arg218–Glu220 and Gln227. L-aspartate is bound at residue His451. Glu485 serves as a coordination point for ATP. An L-aspartate-binding site is contributed by Arg492. Gly537–Arg540 contributes to the ATP binding site.

Belongs to the class-II aminoacyl-tRNA synthetase family. Type 1 subfamily. As to quaternary structure, homodimer.

It localises to the cytoplasm. It carries out the reaction tRNA(Asx) + L-aspartate + ATP = L-aspartyl-tRNA(Asx) + AMP + diphosphate. Functionally, aspartyl-tRNA synthetase with relaxed tRNA specificity since it is able to aspartylate not only its cognate tRNA(Asp) but also tRNA(Asn). Reaction proceeds in two steps: L-aspartate is first activated by ATP to form Asp-AMP and then transferred to the acceptor end of tRNA(Asp/Asn). This Dechloromonas aromatica (strain RCB) protein is Aspartate--tRNA(Asp/Asn) ligase.